The chain runs to 346 residues: Formimidoylglutamase (346 aa).

Residues His-145, Asp-180, His-182, Asp-184, Asp-271, and Asp-273 each contribute to the Mn(2+) site.

Belongs to the arginase family. It depends on Mn(2+) as a cofactor.

It carries out the reaction N-formimidoyl-L-glutamate + H2O = formamide + L-glutamate. It participates in amino-acid degradation; L-histidine degradation into L-glutamate; L-glutamate from N-formimidoyl-L-glutamate (hydrolase route): step 1/1. Its function is as follows. Catalyzes the conversion of N-formimidoyl-L-glutamate to L-glutamate and formamide. This is Formimidoylglutamase from Psychrobacter cryohalolentis (strain ATCC BAA-1226 / DSM 17306 / VKM B-2378 / K5).